We begin with the raw amino-acid sequence, 308 residues long: Ribonuclease Z (308 aa).

Zn(2+) is bound by residues histidine 61, histidine 63, aspartate 65, histidine 66, histidine 139, aspartate 210, and histidine 268. Aspartate 65 functions as the Proton acceptor in the catalytic mechanism.

Belongs to the RNase Z family. In terms of assembly, homodimer. Zn(2+) serves as cofactor.

It catalyses the reaction Endonucleolytic cleavage of RNA, removing extra 3' nucleotides from tRNA precursor, generating 3' termini of tRNAs. A 3'-hydroxy group is left at the tRNA terminus and a 5'-phosphoryl group is left at the trailer molecule.. Its function is as follows. Zinc phosphodiesterase, which displays some tRNA 3'-processing endonuclease activity. Probably involved in tRNA maturation, by removing a 3'-trailer from precursor tRNA. This Halobacterium salinarum (strain ATCC 700922 / JCM 11081 / NRC-1) (Halobacterium halobium) protein is Ribonuclease Z.